A 476-amino-acid polypeptide reads, in one-letter code: Arginine biosynthesis bifunctional protein ArgJ, mitochondrial (476 aa).

Residues T193, K219, T237, E337, N471, and S476 each contribute to the substrate site. T237 serves as the catalytic Nucleophile.

This sequence belongs to the ArgJ family. Heterodimer of an alpha and a beta chain. Post-translationally, the alpha and beta chains are autoproteolytically processed from a single precursor protein within the mitochondrion.

It localises to the mitochondrion matrix. The catalysed reaction is N(2)-acetyl-L-ornithine + L-glutamate = N-acetyl-L-glutamate + L-ornithine. The enzyme catalyses L-glutamate + acetyl-CoA = N-acetyl-L-glutamate + CoA + H(+). The protein operates within amino-acid biosynthesis; L-arginine biosynthesis; L-ornithine and N-acetyl-L-glutamate from L-glutamate and N(2)-acetyl-L-ornithine (cyclic): step 1/1. It functions in the pathway amino-acid biosynthesis; L-arginine biosynthesis; N(2)-acetyl-L-ornithine from L-glutamate: step 1/4. Catalyzes two activities which are involved in the cyclic version of arginine biosynthesis: the synthesis of acetylglutamate from glutamate and acetyl-CoA, and of ornithine by transacetylation between acetylornithine and glutamate. This is Arginine biosynthesis bifunctional protein ArgJ, mitochondrial from Cryptococcus neoformans var. neoformans serotype D (strain B-3501A) (Filobasidiella neoformans).